A 291-amino-acid polypeptide reads, in one-letter code: 6-deoxy-6-sulfogluconolactonase (291 aa).

Glu17, Asn148, and Asp198 together coordinate a divalent metal cation. Residue Asp198 is the Proton donor/acceptor of the active site.

This sequence belongs to the SMP-30/CGR1 family. The cofactor is a divalent metal cation.

It catalyses the reaction 6-deoxy-6-sulfo-D-glucono-1,5-lactone + H2O = 6-deoxy-6-sulfo-D-gluconate + H(+). Its function is as follows. Catalyzes the hydrolysis of 6-deoxy-6-sulfo-D-glucono-1,5-lactone to form 6-deoxy-6-sulfo-D-gluconate. Is involved in a degradation pathway of sulfoquinovose (SQ) that allows P.putida SQ1 to use SQ as the sole carbon and energy source for growth. In Pseudomonas putida (Arthrobacter siderocapsulatus), this protein is 6-deoxy-6-sulfogluconolactonase.